The chain runs to 429 residues: Phosphoribosylamine--glycine ligase (429 aa).

Residues 109–316 (KDFLARHQIP…LVDLCLAAID (208 aa)) form the ATP-grasp domain. 135–196 (VREQGAPIVV…EEFLDGEEAS (62 aa)) is a binding site for ATP. A disordered region spans residues 212-235 (SQDHKRVGDKDTGPNTGGMGAYSP). The span at 213 to 223 (QDHKRVGDKDT) shows a compositional bias: basic and acidic residues. Residues glutamate 286 and asparagine 288 each contribute to the Mg(2+) site.

It belongs to the GARS family. Mg(2+) is required as a cofactor. Requires Mn(2+) as cofactor.

The catalysed reaction is 5-phospho-beta-D-ribosylamine + glycine + ATP = N(1)-(5-phospho-beta-D-ribosyl)glycinamide + ADP + phosphate + H(+). Its pathway is purine metabolism; IMP biosynthesis via de novo pathway; N(1)-(5-phospho-D-ribosyl)glycinamide from 5-phospho-alpha-D-ribose 1-diphosphate: step 2/2. The protein is Phosphoribosylamine--glycine ligase of Vibrio parahaemolyticus serotype O3:K6 (strain RIMD 2210633).